Reading from the N-terminus, the 440-residue chain is Adenosylhomocysteinase (440 aa).

Thr-47, Asp-123, and Glu-148 together coordinate substrate. 149 to 151 (TTT) serves as a coordination point for NAD(+). Residues Lys-178 and Asp-182 each coordinate substrate. Residues Asn-183, 228 to 233 (GFGDVG), Glu-251, 307 to 309 (IGH), and Asn-354 contribute to the NAD(+) site.

Belongs to the adenosylhomocysteinase family. NAD(+) serves as cofactor.

The enzyme catalyses S-adenosyl-L-homocysteine + H2O = L-homocysteine + adenosine. It functions in the pathway amino-acid biosynthesis; L-homocysteine biosynthesis; L-homocysteine from S-adenosyl-L-homocysteine: step 1/1. Its function is as follows. Adenosylhomocysteine is a competitive inhibitor of S-adenosyl-L-methionine-dependent methyl transferase reactions; therefore adenosylhomocysteinase may play a key role in the control of methylations via regulation of the intracellular concentration of adenosylhomocysteine. The protein is Adenosylhomocysteinase (SAHH) of Pneumocystis carinii.